The chain runs to 263 residues: MPTSIKAIKESLEAVTSLLDPLFQELATDTRSGVQKALKSRQKAIQADLAEEERLEAMLSYEKALYKEGYQAIAGIDEVGRGPLAGPVVAACVILPQHCKIKGLNDSKKIPKAKHETIYQAVKEKALAIGIGIIDNQLIDEVNIYEATKLAMLEAIKQLEGQLTQPDYLLIDAMTLDIAISQQSILKGDANSLSIAAASIVAKVTRDQMMANYDRIFPGYGFAKNAGYGTKEHLQELKAYGITPIHRKSFEPVKSMCCDSTNP.

One can recognise an RNase H type-2 domain in the interval 71–262 (QAIAGIDEVG…VKSMCCDSTN (192 aa)). 3 residues coordinate a divalent metal cation: aspartate 77, glutamate 78, and aspartate 172.

This sequence belongs to the RNase HII family. It depends on Mn(2+) as a cofactor. Mg(2+) is required as a cofactor.

Its subcellular location is the cytoplasm. The catalysed reaction is Endonucleolytic cleavage to 5'-phosphomonoester.. Functionally, endonuclease that specifically degrades the RNA of RNA-DNA hybrids. The chain is Ribonuclease HII from Streptococcus pyogenes serotype M3 (strain ATCC BAA-595 / MGAS315).